An 83-amino-acid chain; its full sequence is Calsensin (83 aa).

EF-hand domains lie at 4–39 (KVKA…LDAY) and 46–81 (KVKE…LLCQ). The Ca(2+) site is built by aspartate 17, asparagine 19, aspartate 21, tyrosine 23, glutamate 28, aspartate 59, asparagine 61, aspartate 63, lysine 65, and glutamate 70.

In terms of tissue distribution, selectively expressed in a small group of neurons.

It is found in the cytoplasm. In terms of biological role, may function as a trigger protein which interacts with a larger protein. May mediate calcium-dependent signal transduction events in the growth cones and axons of a small group of sensory neurons which fasciculate in a single axon tract. This chain is Calsensin, found in Haemopis marmorata (Green horse leech).